Here is a 316-residue protein sequence, read N- to C-terminus: Acetaldehyde dehydrogenase (316 aa).

11-14 (SGNI) contributes to the NAD(+) binding site. Residue Cys-131 is the Acyl-thioester intermediate of the active site. NAD(+) is bound by residues 162–170 (SAGPGTRAN) and Asn-289.

The protein belongs to the acetaldehyde dehydrogenase family. As to quaternary structure, interacts with MhpE.

It carries out the reaction acetaldehyde + NAD(+) + CoA = acetyl-CoA + NADH + H(+). The protein operates within aromatic compound metabolism; 3-phenylpropanoate degradation. Its function is as follows. Catalyzes the conversion of acetaldehyde to acetyl-CoA, using NAD(+) and coenzyme A. Is the final enzyme in the meta-cleavage pathway for the degradation of aromatic compounds. This chain is Acetaldehyde dehydrogenase, found in Escherichia coli O157:H7.